The sequence spans 476 residues: Aspartyl/glutamyl-tRNA(Asn/Gln) amidotransferase subunit B (476 aa).

Belongs to the GatB/GatE family. GatB subfamily. Heterotrimer of A, B and C subunits.

It catalyses the reaction L-glutamyl-tRNA(Gln) + L-glutamine + ATP + H2O = L-glutaminyl-tRNA(Gln) + L-glutamate + ADP + phosphate + H(+). The catalysed reaction is L-aspartyl-tRNA(Asn) + L-glutamine + ATP + H2O = L-asparaginyl-tRNA(Asn) + L-glutamate + ADP + phosphate + 2 H(+). Its function is as follows. Allows the formation of correctly charged Asn-tRNA(Asn) or Gln-tRNA(Gln) through the transamidation of misacylated Asp-tRNA(Asn) or Glu-tRNA(Gln) in organisms which lack either or both of asparaginyl-tRNA or glutaminyl-tRNA synthetases. The reaction takes place in the presence of glutamine and ATP through an activated phospho-Asp-tRNA(Asn) or phospho-Glu-tRNA(Gln). The sequence is that of Aspartyl/glutamyl-tRNA(Asn/Gln) amidotransferase subunit B from Neisseria meningitidis serogroup C / serotype 2a (strain ATCC 700532 / DSM 15464 / FAM18).